A 345-amino-acid chain; its full sequence is L-threonine 3-dehydrogenase (345 aa).

Cys-42 contacts Zn(2+). Catalysis depends on charge relay system residues Thr-44 and His-47. Residues His-67, Glu-68, Cys-97, Cys-100, Cys-103, and Cys-111 each contribute to the Zn(2+) site. NAD(+)-binding positions include Ile-179, Asp-199, Arg-204, 266-268 (LGI), and 290-291 (IY).

Belongs to the zinc-containing alcohol dehydrogenase family. As to quaternary structure, homotetramer. Requires Zn(2+) as cofactor.

It localises to the cytoplasm. It catalyses the reaction L-threonine + NAD(+) = (2S)-2-amino-3-oxobutanoate + NADH + H(+). It participates in amino-acid degradation; L-threonine degradation via oxydo-reductase pathway; glycine from L-threonine: step 1/2. In terms of biological role, catalyzes the NAD(+)-dependent oxidation of L-threonine to 2-amino-3-ketobutyrate. This Rhizobium johnstonii (strain DSM 114642 / LMG 32736 / 3841) (Rhizobium leguminosarum bv. viciae) protein is L-threonine 3-dehydrogenase.